Reading from the N-terminus, the 419-residue chain is Dual specificity protein phosphatase 7 (419 aa).

The interval 1 to 41 is disordered; that stretch reads MKNQLRGPPVRAHMSTSGAAAAGGTRAGSEPGAGSGSSAGI. Over residues 15 to 30 the composition is skewed to low complexity; the sequence is STSGAAAAGGTRAGSE. The span at 31–41 shows a compositional bias: gly residues; sequence PGAGSGSSAGI. The Rhodanese domain occupies 68 to 187; the sequence is GGASLLLLDC…FQTEYSEHCE (120 aa). Residues 216–240 are disordered; that stretch reads CSDGESDRELPSSATESDGSPVPSS. The span at 227 to 240 shows a compositional bias: polar residues; it reads SSATESDGSPVPSS. The region spanning 244–387 is the Tyrosine-protein phosphatase domain; the sequence is FPVQILPYLY…LLDFERTLGL (144 aa). Cys331 acts as the Phosphocysteine intermediate in catalysis. 331–337 lines the substrate pocket; sequence CLAGISR.

This sequence belongs to the protein-tyrosine phosphatase family. Non-receptor class dual specificity subfamily. In terms of assembly, interacts with MAPK1/ERK2; the interaction enhances DUSP7 phosphatase activity.

It is found in the cytoplasm. The enzyme catalyses O-phospho-L-tyrosyl-[protein] + H2O = L-tyrosyl-[protein] + phosphate. The catalysed reaction is O-phospho-L-seryl-[protein] + H2O = L-seryl-[protein] + phosphate. It carries out the reaction O-phospho-L-threonyl-[protein] + H2O = L-threonyl-[protein] + phosphate. Strongly inhibited by sodium orthovanadate. Its function is as follows. Dual specificity protein phosphatase. Shows high activity towards MAPK1/ERK2. Also has lower activity towards MAPK14 and MAPK8. In arrested oocytes, plays a role in meiotic resumption. Promotes nuclear envelope breakdown and activation of the CDK1/Cyclin-B complex in oocytes, probably by dephosphorylating and inactivating the conventional protein kinase C (cPKC) isozyme PRKCB. May also inactivate PRKCA and/or PRKCG. Also important in oocytes for normal chromosome alignment on the metaphase plate and progression to anaphase, where it might regulate activity of the spindle-assembly checkpoint (SAC) complex. The protein is Dual specificity protein phosphatase 7 of Rattus norvegicus (Rat).